The chain runs to 312 residues: Flavonol 3-sulfotransferase (312 aa).

59-64 contacts 3'-phosphoadenylyl sulfate; sequence KSGTTW. His119 functions as the Proton acceptor in the catalytic mechanism. Residues Arg141, Ser149, Tyr207, and 277 to 279 each bind 3'-phosphoadenylyl sulfate; that span reads RKG.

Belongs to the sulfotransferase 1 family. In terms of tissue distribution, highest in shoot tips and lowest in mature leaves and roots.

The protein localises to the cytoplasm. Its function is as follows. Sulfotransferase that utilizes 3'-phospho-5'-adenylyl sulfate (PAPS) as sulfonate donor to catalyze the sulfate conjugation of quercetin, rhamnetin and isorhamnetin but not kaempferol. O-sulfation of position 3 of flavonol. May play a role in auxin transport. This is Flavonol 3-sulfotransferase from Flaveria bidentis (Coastal plain yellowtops).